The chain runs to 344 residues: Probable nicotinate-nucleotide adenylyltransferase/Ap4A hydrolase (344 aa).

The interval 1–182 (MIFGGAFDPL…YIHQHNIYLK (182 aa)) is naMN adenylyltransferase. The tract at residues 191-344 (EPRMQHCLRV…LKYVRSLQKN (154 aa)) is ap4A hydrolase. Positions 193–304 (RMQHCLRVGQ…IYLADKLEPM (112 aa)) constitute an HD domain. His196 provides a ligand contact to ADP. Residues His196, His225, and Asp226 each coordinate Fe cation. Residues 226–229 (DLAK), His255, 281–282 (HT), Asp299, and Arg305 contribute to the ADP site. Asp299 provides a ligand contact to Fe cation.

The protein in the N-terminal section; belongs to the NadD family. In the C-terminal section; belongs to the Ap4A hydrolase YqeK family.

It carries out the reaction nicotinate beta-D-ribonucleotide + ATP + H(+) = deamido-NAD(+) + diphosphate. The enzyme catalyses P(1),P(4)-bis(5'-adenosyl) tetraphosphate + H2O = 2 ADP + 2 H(+). The protein operates within cofactor biosynthesis; NAD(+) biosynthesis; deamido-NAD(+) from nicotinate D-ribonucleotide: step 1/1. Functionally, catalyzes the reversible adenylation of nicotinate mononucleotide (NaMN) to nicotinic acid adenine dinucleotide (NaAD). Its function is as follows. Hydrolyzes diadenosine 5',5'''-P1,P4-tetraphosphate (Ap4A) to yield ADP. The chain is Probable nicotinate-nucleotide adenylyltransferase/Ap4A hydrolase from Mycoplasma pneumoniae (strain ATCC 29342 / M129 / Subtype 1) (Mycoplasmoides pneumoniae).